A 166-amino-acid chain; its full sequence is Phosphopantetheine adenylyltransferase (166 aa).

Ser11 lines the substrate pocket. ATP-binding positions include 11–12 and His19; that span reads SF. Positions 43, 76, and 90 each coordinate substrate. ATP-binding positions include 91 to 93, Glu101, and 126 to 132; these read GLR and MQPISSS.

It belongs to the bacterial CoaD family. As to quaternary structure, homohexamer. Mg(2+) serves as cofactor.

It is found in the cytoplasm. The catalysed reaction is (R)-4'-phosphopantetheine + ATP + H(+) = 3'-dephospho-CoA + diphosphate. It functions in the pathway cofactor biosynthesis; coenzyme A biosynthesis; CoA from (R)-pantothenate: step 4/5. Its function is as follows. Reversibly transfers an adenylyl group from ATP to 4'-phosphopantetheine, yielding dephospho-CoA (dPCoA) and pyrophosphate. The chain is Phosphopantetheine adenylyltransferase from Streptococcus uberis (strain ATCC BAA-854 / 0140J).